Here is a 132-residue protein sequence, read N- to C-terminus: Small ribosomal subunit protein uS8 (132 aa).

This sequence belongs to the universal ribosomal protein uS8 family. As to quaternary structure, part of the 30S ribosomal subunit. Contacts proteins S5 and S12.

One of the primary rRNA binding proteins, it binds directly to 16S rRNA central domain where it helps coordinate assembly of the platform of the 30S subunit. This chain is Small ribosomal subunit protein uS8, found in Allorhizobium ampelinum (strain ATCC BAA-846 / DSM 112012 / S4) (Agrobacterium vitis (strain S4)).